Reading from the N-terminus, the 1496-residue chain is Chromosome partition protein MukB (1496 aa).

Residue 63–70 (GGNGAGKS) participates in ATP binding. Coiled-coil stretches lie at residues 328-493 (KLEL…QRLS) and 536-632 (KMQA…APAW). Positions 694 to 811 (PDGSDDVRLN…EVPLFGRAAR (118 aa)) are flexible hinge. 2 coiled-coil regions span residues 861–1171 (NPEE…SAEE) and 1235–1291 (IDAI…LQNI). Over residues 1082–1091 (RARSRRDELQ) the composition is skewed to basic and acidic residues. The tract at residues 1082-1101 (RARSRRDELQQRLSQQRSRK) is disordered.

The protein belongs to the SMC family. MukB subfamily. In terms of assembly, homodimerization via its hinge domain. Binds to DNA via its C-terminal region. Interacts, and probably forms a ternary complex, with MukE and MukF via its C-terminal region. The complex formation is stimulated by calcium or magnesium. Interacts with tubulin-related protein FtsZ.

It is found in the cytoplasm. The protein localises to the nucleoid. In terms of biological role, plays a central role in chromosome condensation, segregation and cell cycle progression. Functions as a homodimer, which is essential for chromosome partition. Involved in negative DNA supercoiling in vivo, and by this means organize and compact chromosomes. May achieve or facilitate chromosome segregation by condensation DNA from both sides of a centrally located replisome during cell division. In Actinobacillus pleuropneumoniae serotype 3 (strain JL03), this protein is Chromosome partition protein MukB.